Reading from the N-terminus, the 174-residue chain is MFIGDASILKPIQWCATEHPELPADIADWLMELGSMTRRFEQHCQRVHVEPQRECFITRDALGEEAEHLPVSQRYWLREIVLFGDNVPWLLGRTVIPEETLSGPDRALVDLGTLPLGRYLFSGDALTRDYIHVGRQDNLWARRSLLRLSGNPLLLTEVFLPASPLYTHCDSIPK.

Substrate is bound by residues methionine 36, arginine 78, leucine 116, and glutamate 157.

It belongs to the UbiC family. In terms of assembly, monomer.

It localises to the cytoplasm. It catalyses the reaction chorismate = 4-hydroxybenzoate + pyruvate. It functions in the pathway cofactor biosynthesis; ubiquinone biosynthesis. Removes the pyruvyl group from chorismate, with concomitant aromatization of the ring, to provide 4-hydroxybenzoate (4HB) for the ubiquinone pathway. This Yersinia pestis bv. Antiqua (strain Angola) protein is Chorismate pyruvate-lyase.